A 626-amino-acid chain; its full sequence is Janus kinase and microtubule-interacting protein 1 (626 aa).

Positions 1–25 are disordered; it reads MSKKGRSKGDKPEAETDSVQMANEE. Positions 1–365 are mediates association with microtubules; that stretch reads MSKKGRSKGD…KLKSLTRENV (365 aa). Coiled coils occupy residues 13–255 and 284–413; these read EAET…EAER and ERDV…DDLS. Residues 365-626 form a mediates interaction with TYK2 and GABBR1 region; the sequence is VEMKEKLSAQ…ILFEPKLKFM (262 aa). Ser-382 is modified (phosphoserine). The segment covering 452-461 has biased composition (polar residues); the sequence is ETLSETSYNT. Residues 452-481 form a disordered region; sequence ETLSETSYNTDRTDRTPATPEEDLDETTTR. Thr-470 is modified (phosphothreonine). A coiled-coil region spans residues 490–604; that stretch reads QLTREYQALQ…EFRVLELEVR (115 aa).

This sequence belongs to the JAKMIP family. As to quaternary structure, homodimer. Interacts with JAK1 and TYK2. Forms a complex with GABBR1 and KIF5B/kinesin-1. In terms of processing, phosphorylated.

The protein resides in the cytoplasm. Its subcellular location is the cytoskeleton. The protein localises to the membrane. Functionally, associates with microtubules and may play a role in the microtubule-dependent transport of the GABA-B receptor. May play a role in JAK1 signaling and regulate microtubule cytoskeleton rearrangements. This chain is Janus kinase and microtubule-interacting protein 1 (Jakmip1), found in Mus musculus (Mouse).